The chain runs to 494 residues: Putative glucuronosyltransferase PGSIP7 (494 aa).

A helical membrane pass occupies residues 4–24; that stretch reads QRTLMFSCWVLSLLIIKTTAY. Positions 161 and 163 each coordinate Mn(2+). 5 helical membrane passes run 316-336, 362-382, 389-409, 410-430, and 444-464; these read YSAEMPWVLTQAVFYLGIILV, AFKFVALLFILSAYIIPFFII, LIGWSLYLTGSFALSTIPINA, FLLPILPVITPWLGIFGTLLV, and LSVFGYAFCCAPFLWVSFVKI.

This sequence belongs to the glycosyltransferase 8 family. Glycogenin subfamily. It depends on Mn(2+) as a cofactor.

The protein resides in the membrane. In Arabidopsis thaliana (Mouse-ear cress), this protein is Putative glucuronosyltransferase PGSIP7 (PGSIP7).